The following is a 271-amino-acid chain: Very long chain fatty acid elongase 3 (271 aa).

Asparagine 6 carries an N-linked (GlcNAc...) asparagine glycan. 7 consecutive transmembrane segments (helical) span residues phenylalanine 30–valine 50, proline 67–tryptophan 87, phenylalanine 116–isoleucine 136, proline 141–tyrosine 161, valine 165–threonine 187, leucine 199–isoleucine 219, and histidine 236–histidine 256.

Belongs to the ELO family. ELOVL3 subfamily. Interacts with TECR. N-Glycosylated. As to expression, expressed in brown adipose tissue and liver. In the skin, strong expressed in the cells of the inner layer of the outer root sheath of the hair follicles and in the sebocytes of the sebaceous glands. Hardly detectable in the epidermis and not at all in fibroblasts.

It localises to the endoplasmic reticulum membrane. The catalysed reaction is a very-long-chain acyl-CoA + malonyl-CoA + H(+) = a very-long-chain 3-oxoacyl-CoA + CO2 + CoA. It catalyses the reaction eicosanoyl-CoA + malonyl-CoA + H(+) = 3-oxodocosanoyl-CoA + CO2 + CoA. It carries out the reaction hexadecanoyl-CoA + malonyl-CoA + H(+) = 3-oxooctadecanoyl-CoA + CO2 + CoA. The enzyme catalyses octadecanoyl-CoA + malonyl-CoA + H(+) = 3-oxoeicosanoyl-CoA + CO2 + CoA. The catalysed reaction is (9Z)-octadecenoyl-CoA + malonyl-CoA + H(+) = 3-oxo-(11Z)-eicosenoyl-CoA + CO2 + CoA. It catalyses the reaction (9Z,12Z)-octadecadienoyl-CoA + malonyl-CoA + H(+) = (11Z,14Z)-3-oxoicosa-11,14-dienoyl-CoA + CO2 + CoA. It carries out the reaction (9Z,12Z,15Z)-octadecatrienoyl-CoA + malonyl-CoA + H(+) = (11Z,14Z,17Z)-3-oxoeicosatrienoyl-CoA + CO2 + CoA. The enzyme catalyses docosanoyl-CoA + malonyl-CoA + H(+) = 3-oxotetracosanoyl-CoA + CO2 + CoA. The catalysed reaction is tetradecanoyl-CoA + malonyl-CoA + H(+) = 3-oxohexadecanoyl-CoA + CO2 + CoA. It participates in lipid metabolism; polyunsaturated fatty acid biosynthesis. Functionally, catalyzes the first and rate-limiting reaction of the four reactions that constitute the long-chain fatty acids elongation cycle. This endoplasmic reticulum-bound enzymatic process allows the addition of 2 carbons to the chain of long- and very long-chain fatty acids (VLCFAs) per cycle. Condensing enzyme that exhibits activity toward saturated and unsaturated acyl-CoA substrates with higher activity toward C18 acyl-CoAs, especially C18:0 acyl-CoAs. May participate in the production of saturated and monounsaturated VLCFAs of different chain lengths that are involved in multiple biological processes as precursors of membrane lipids and lipid mediators. Participates in the formation of certain VLCFA and triglycerides in certain cells of the hair follicles and the sebaceous glands, required for skin barrier function. Critical enzyme for lipid accumulation and metabolic activity in brown adipocytes during the early phase of the tissue recruitment. Plays a role in lipid storage and in resistance to diet-induced obesity. This chain is Very long chain fatty acid elongase 3, found in Mus musculus (Mouse).